The following is a 410-amino-acid chain: S-adenosylmethionine synthase (410 aa).

His15 contributes to the ATP binding site. Position 17 (Asp17) interacts with Mg(2+). Glu43 is a binding site for K(+). Positions 56 and 100 each coordinate L-methionine. A flexible loop region spans residues 100–110 (QSPDIAKGVDT). Residues 171 to 173 (DGK), 248 to 249 (KF), Asp257, 263 to 264 (RK), Ala280, and Lys284 each bind ATP. Asp257 provides a ligand contact to L-methionine. Lys288 lines the L-methionine pocket.

The protein belongs to the AdoMet synthase family. As to quaternary structure, homotetramer; dimer of dimers. It depends on Mg(2+) as a cofactor. K(+) serves as cofactor.

It is found in the cytoplasm. The enzyme catalyses L-methionine + ATP + H2O = S-adenosyl-L-methionine + phosphate + diphosphate. It functions in the pathway amino-acid biosynthesis; S-adenosyl-L-methionine biosynthesis; S-adenosyl-L-methionine from L-methionine: step 1/1. Functionally, catalyzes the formation of S-adenosylmethionine (AdoMet) from methionine and ATP. The overall synthetic reaction is composed of two sequential steps, AdoMet formation and the subsequent tripolyphosphate hydrolysis which occurs prior to release of AdoMet from the enzyme. In Prochlorococcus marinus (strain MIT 9211), this protein is S-adenosylmethionine synthase.